We begin with the raw amino-acid sequence, 334 residues long: MIVIPRYSLIKEKASERLPELLENLNLKKPLVITGKNTKKYSKGFEFIYYDEIDIYNEEGFQKIGKEYDSIIGIGGGKPIDIGKIISNKSKKPFVSVPTTASNDGIASPIVSLTQPSYLAESPIAIVADIDIIRESPKKLLSAGMGDIVSNITAVLDWELGKIEMNEKYSDSSGIFSKTIAIELIDYVLNYDLKEYPKKLVKSLIGSGISIAIAHSSRPASGSEHLFSHALDNLKNKYELNINSLHGEQCGLGTIIISQMYYEEGRIDFKTVEKVKNSLKAVNAPVTGKKLGFDEDLLIEALSSAHKVRKRHTILRNGLSKEKAREILEKSEII.

Residues 77-81 (GKPID) and 99-102 (TTAS) contribute to the NAD(+) site. D104 lines the substrate pocket. S108 serves as a coordination point for NAD(+). A substrate-binding site is contributed by D147. D147 and H225 together coordinate Zn(2+). H229 is a substrate binding site. Residue H246 coordinates Zn(2+).

It belongs to the glycerol-1-phosphate dehydrogenase family. The cofactor is Zn(2+).

It is found in the cytoplasm. The enzyme catalyses sn-glycerol 1-phosphate + NAD(+) = dihydroxyacetone phosphate + NADH + H(+). The catalysed reaction is sn-glycerol 1-phosphate + NADP(+) = dihydroxyacetone phosphate + NADPH + H(+). The protein operates within membrane lipid metabolism; glycerophospholipid metabolism. Its function is as follows. Catalyzes the NAD(P)H-dependent reduction of dihydroxyacetonephosphate (DHAP or glycerone phosphate) to glycerol 1-phosphate (G1P). The G1P thus generated is used as the glycerophosphate backbone of phospholipids in the cellular membranes of Archaea. This is Glycerol-1-phosphate dehydrogenase [NAD(P)+] from Methanococcus vannielii (strain ATCC 35089 / DSM 1224 / JCM 13029 / OCM 148 / SB).